A 187-amino-acid polypeptide reads, in one-letter code: UPF0301 protein SO_3346 (187 aa).

The protein belongs to the UPF0301 (AlgH) family.

The polypeptide is UPF0301 protein SO_3346 (Shewanella oneidensis (strain ATCC 700550 / JCM 31522 / CIP 106686 / LMG 19005 / NCIMB 14063 / MR-1)).